The primary structure comprises 57 residues: LECYDTIFKWHTMTCPEGQNLCFYYFTWRIFLVRGCTATCPVGYSHTHCCDTDKCNN.

Cystine bridges form between cysteine 3–cysteine 22, cysteine 15–cysteine 36, cysteine 40–cysteine 49, and cysteine 50–cysteine 55.

It belongs to the three-finger toxin family. Short-chain subfamily. In terms of tissue distribution, expressed by the venom gland.

The protein resides in the secreted. Functionally, this toxin shifts the voltage-dependence of Nav1.4/SCN4A activation to more hyperpolarised potentials, inhibits inactivation, and produces large ramp currents, consistent with its profound effects on contractile force in an isolated skeletal muscle preparation. This toxin produces large muscle contractions and fasciculations in the indirectly stimulated chick biventer cervicis nerve-muscle assay, which are significantly inhibited by the addition of the sodium channel antagonist tetrodotoxin. In Calliophis bivirgatus (Blue Malaysian coral snake), this protein is Delta-elapitoxin-Cb1a.